A 733-amino-acid polypeptide reads, in one-letter code: Lanosterol synthase (733 aa).

Threonine 2 carries the N-acetylthreonine modification. Residues 125 to 166 (REEMVRYLRSVQLPDGGWGLHIEDKSTVFGTALNYVALRILG) form a PFTB 1 repeat. Catalysis depends on aspartate 456, which acts as the Proton donor. PFTB repeat units follow at residues 484-529 (LCDA…MIDY), 561-601 (LNQG…ACMG), and 613-654 (VAQA…HSTC).

Belongs to the terpene cyclase/mutase family. In terms of assembly, monomer.

The protein localises to the endoplasmic reticulum membrane. The enzyme catalyses (S)-2,3-epoxysqualene = lanosterol. It functions in the pathway terpene metabolism; lanosterol biosynthesis; lanosterol from farnesyl diphosphate: step 3/3. Its function is as follows. Key enzyme in the cholesterol biosynthesis pathway. Catalyzes the cyclization of (S)-2,3 oxidosqualene to lanosterol, a reaction that forms the sterol nucleus. Through the production of lanosterol may regulate lens protein aggregation and increase transparency. The sequence is that of Lanosterol synthase from Mus musculus (Mouse).